A 148-amino-acid chain; its full sequence is Large ribosomal subunit protein bL9 (148 aa).

This sequence belongs to the bacterial ribosomal protein bL9 family.

In terms of biological role, binds to the 23S rRNA. In Pseudomonas savastanoi pv. phaseolicola (strain 1448A / Race 6) (Pseudomonas syringae pv. phaseolicola (strain 1448A / Race 6)), this protein is Large ribosomal subunit protein bL9.